A 157-amino-acid polypeptide reads, in one-letter code: Endoribonuclease YbeY (157 aa).

The Zn(2+) site is built by H111, H115, and H121. The segment at 136 to 157 (ELLAELGHPDPYADDETDSITH) is disordered. Positions 147–157 (YADDETDSITH) are enriched in acidic residues.

The protein belongs to the endoribonuclease YbeY family. It depends on Zn(2+) as a cofactor.

It localises to the cytoplasm. Single strand-specific metallo-endoribonuclease involved in late-stage 70S ribosome quality control and in maturation of the 3' terminus of the 16S rRNA. This chain is Endoribonuclease YbeY, found in Pseudomonas putida (strain ATCC 700007 / DSM 6899 / JCM 31910 / BCRC 17059 / LMG 24140 / F1).